The chain runs to 1267 residues: DNA-directed RNA polymerase subunit beta (1267 aa).

This sequence belongs to the RNA polymerase beta chain family. As to quaternary structure, the RNAP catalytic core consists of 2 alpha, 1 beta, 1 beta' and 1 omega subunit. When a sigma factor is associated with the core the holoenzyme is formed, which can initiate transcription.

The catalysed reaction is RNA(n) + a ribonucleoside 5'-triphosphate = RNA(n+1) + diphosphate. In terms of biological role, DNA-dependent RNA polymerase catalyzes the transcription of DNA into RNA using the four ribonucleoside triphosphates as substrates. The sequence is that of DNA-directed RNA polymerase subunit beta (rpoB) from Carsonella ruddii (strain PV).